The chain runs to 245 residues: Small ribosomal subunit protein uS3 (245 aa).

Residues 39-108 (IRNYIKKNYY…SVFVNVQEVK (70 aa)) form the KH type-2 domain.

The protein belongs to the universal ribosomal protein uS3 family. As to quaternary structure, part of the 30S ribosomal subunit. Forms a tight complex with proteins S10 and S14.

Binds the lower part of the 30S subunit head. Binds mRNA in the 70S ribosome, positioning it for translation. The sequence is that of Small ribosomal subunit protein uS3 from Dictyoglomus turgidum (strain DSM 6724 / Z-1310).